Consider the following 82-residue polypeptide: Small ribosomal subunit protein uS17 (82 aa).

The protein belongs to the universal ribosomal protein uS17 family. Part of the 30S ribosomal subunit.

In terms of biological role, one of the primary rRNA binding proteins, it binds specifically to the 5'-end of 16S ribosomal RNA. This Nitrobacter hamburgensis (strain DSM 10229 / NCIMB 13809 / X14) protein is Small ribosomal subunit protein uS17.